A 329-amino-acid polypeptide reads, in one-letter code: MARRYLFEFEKPLVELEQQIEQIRELARDSEVDVSQQLLQLETLAARRREEIFQALTPAEKIQVARHPHRPSTLDFIQMFCDDWVELHGDRRGSDDQALVGGVGRIGKRSVLLIGHQKGRDTKENVARNFGMATPGGYRKALRLMDHADRFRLPILTFIDTPGAYAGLLAEEQGQGEAIAVNLREMFRLRVPVIATVIGEGGSGGALGIGVADRLLMFEHSVYTVASPEACASILWRDAAKAPEAAAALKITGPDLLNLGVVDEVLPEPAGGNNWAPLQAGEVLREAIERHLDELLGLKVNQLREARYRKFRAMGRVLDPSSSETGLPA.

The 255-residue stretch at 40–294 (QLETLAARRR…REAIERHLDE (255 aa)) folds into the CoA carboxyltransferase C-terminal domain.

It belongs to the AccA family. In terms of assembly, acetyl-CoA carboxylase is a heterohexamer composed of biotin carboxyl carrier protein (AccB), biotin carboxylase (AccC) and two subunits each of ACCase subunit alpha (AccA) and ACCase subunit beta (AccD).

It localises to the cytoplasm. The catalysed reaction is N(6)-carboxybiotinyl-L-lysyl-[protein] + acetyl-CoA = N(6)-biotinyl-L-lysyl-[protein] + malonyl-CoA. It functions in the pathway lipid metabolism; malonyl-CoA biosynthesis; malonyl-CoA from acetyl-CoA: step 1/1. Its function is as follows. Component of the acetyl coenzyme A carboxylase (ACC) complex. First, biotin carboxylase catalyzes the carboxylation of biotin on its carrier protein (BCCP) and then the CO(2) group is transferred by the carboxyltransferase to acetyl-CoA to form malonyl-CoA. This Prochlorococcus marinus (strain MIT 9313) protein is Acetyl-coenzyme A carboxylase carboxyl transferase subunit alpha.